We begin with the raw amino-acid sequence, 644 residues long: Chaperone protein DnaK (644 aa).

T199 carries the phosphothreonine; by autocatalysis modification. The interval 603–644 (YAKKSSEGQAAQGQTQSQESTKPAEEGVVDAEFEEVKEEDKK) is disordered. A compositionally biased stretch (polar residues) spans 609 to 623 (EGQAAQGQTQSQEST). Residues 629 to 644 (GVVDAEFEEVKEEDKK) are compositionally biased toward acidic residues.

Belongs to the heat shock protein 70 family.

Its function is as follows. Acts as a chaperone. The chain is Chaperone protein DnaK from Legionella pneumophila (strain Corby).